The following is a 949-amino-acid chain: MAM domain-containing glycosylphosphatidylinositol anchor protein 2 (949 aa).

An N-terminal signal peptide occupies residues 1-25; it reads MDLVYGLVWLLTVLLEGISGQGVYA. 2 Ig-like domains span residues 27 to 127 and 134 to 232; these read PTVR…IRVD and PVVT…KMVS. Disulfide bonds link cysteine 62/cysteine 110 and cysteine 159/cysteine 216. Residues asparagine 92, asparagine 213, and asparagine 237 are each glycosylated (N-linked (GlcNAc...) asparagine). 4 Ig-like domains span residues 242-328, 340-436, 442-533, and 540-627; these read PSIK…NIIV, PDPY…VNIS, PNLT…ALVQ, and PAVE…FLVT. 2 disulfides stabilise this stretch: cysteine 264–cysteine 310 and cysteine 359–cysteine 417. 5 N-linked (GlcNAc...) asparagine glycosylation sites follow: asparagine 434, asparagine 443, asparagine 504, asparagine 610, and asparagine 703. Intrachain disulfides connect cysteine 465/cysteine 515 and cysteine 561/cysteine 611. The Fibronectin type-III domain maps to 638–738; that stretch reads DTYNPVWQNR…TIRVIKYTGE (101 aa). Residues 739-914 form the MAM domain; the sequence is FHCGFEDGNI…VSIAEGECAK (176 aa). Residue aspartate 924 is the site of GPI-anchor amidated aspartate attachment. Residues 925–949 constitute a propeptide, removed in mature form; it reads GAVGILVHIWLFPVIILISILSPRR.

In terms of assembly, interacts (through the Ig-like domains) with NLGN2.

The protein localises to the cell membrane. May be involved in cell-cell interactions. This is MAM domain-containing glycosylphosphatidylinositol anchor protein 2 (Mdga2) from Mus musculus (Mouse).